Here is a 782-residue protein sequence, read N- to C-terminus: DnaJ homolog subfamily C member 16 (782 aa).

Residues 1 to 25 (MEVRKLSISWQFLIVLVLILQILSA) form the signal peptide. Residues 26 to 535 (LDFDPYRVLG…DSIFHNNWRE (510 aa)) lie on the Cytoplasmic side of the membrane. The J domain occupies 29-93 (DPYRVLGVSR…EKRSNYDQYG (65 aa)). The Thioredoxin domain maps to 119 to 247 (FYFDESFFHF…LRQFVESLLP (129 aa)). A helical; Anchor for type IV membrane protein transmembrane segment spans residues 536–556 (MMPLLSLIFSALFILFGTVIV). Over 557 to 782 (QAFSDSNDER…FYIPSWPELD (226 aa)) the chain is Extracellular. Residues 562–593 (SNDERESSPPEKEEAQEKTGKTEPSFTKENSS) are disordered. Residues 563–582 (NDERESSPPEKEEAQEKTGK) show a composition bias toward basic and acidic residues. Residues 583-593 (TEPSFTKENSS) are compositionally biased toward polar residues. Residue N631 is glycosylated (N-linked (GlcNAc...) asparagine).

The protein localises to the endoplasmic reticulum membrane. Plays an important role in regulating the size of autophagosomes during the formation process. In Homo sapiens (Human), this protein is DnaJ homolog subfamily C member 16 (DNAJC16).